The following is a 174-amino-acid chain: Xanthine-guanine phosphoribosyltransferase (174 aa).

5-phospho-alpha-D-ribose 1-diphosphate contacts are provided by residues 49-50 (RG) and 108-116 (DDLVDTGAT). Aspartate 109 serves as a coordination point for Mg(2+). 2 residues coordinate guanine: aspartate 112 and isoleucine 155. Xanthine contacts are provided by aspartate 112 and isoleucine 155. GMP-binding positions include 112 to 116 (DTGAT) and 154 to 155 (WI).

Belongs to the purine/pyrimidine phosphoribosyltransferase family. XGPT subfamily. As to quaternary structure, homotetramer. Requires Mg(2+) as cofactor.

It is found in the cell inner membrane. The enzyme catalyses GMP + diphosphate = guanine + 5-phospho-alpha-D-ribose 1-diphosphate. The catalysed reaction is XMP + diphosphate = xanthine + 5-phospho-alpha-D-ribose 1-diphosphate. It carries out the reaction IMP + diphosphate = hypoxanthine + 5-phospho-alpha-D-ribose 1-diphosphate. It participates in purine metabolism; GMP biosynthesis via salvage pathway; GMP from guanine: step 1/1. The protein operates within purine metabolism; XMP biosynthesis via salvage pathway; XMP from xanthine: step 1/1. Functionally, purine salvage pathway enzyme that catalyzes the transfer of the ribosyl-5-phosphate group from 5-phospho-alpha-D-ribose 1-diphosphate (PRPP) to the N9 position of the 6-oxopurines guanine and xanthine to form the corresponding ribonucleotides GMP (guanosine 5'-monophosphate) and XMP (xanthosine 5'-monophosphate), with the release of PPi. To a lesser extent, also acts on hypoxanthine. In Rhodopseudomonas palustris (strain BisB18), this protein is Xanthine-guanine phosphoribosyltransferase.